A 218-amino-acid polypeptide reads, in one-letter code: MASFTTNSLALRASILANPRLPPPIIRPRLSLPRKLSFNLSLHNARTIVSSAVTSSSPVLSSKPPSQFPFSDSTRSITTLVLLAGVVIKSLIQKLSVAIVNLSPQIQASFRTASPLFFASLRDRPAGYLNTPLTVVAAGLSKWLDIYSGVLMVRVLLSWFPNIPWDRQPLSAIRDLCDPYLNLFRNIIPPVFDTLDVSPLLAFAVLGTLGSILNNSRG.

Residues 1-83 (MASFTTNSLA…TRSITTLVLL (83 aa)) constitute a chloroplast transit peptide. The next 2 helical transmembrane spans lie at 133–153 (LTVVAAGLSKWLDIYSGVLMV) and 187–207 (IIPPVFDTLDVSPLLAFAVLG).

Belongs to the YggT family.

The protein localises to the plastid. The protein resides in the chloroplast thylakoid membrane. Functionally, not required for the biogenesis and accumulation of native cytochrome b6 in the thylakoid membrane. Not functionally involved in the pathway for covalent binding of the c-type heme to cytochrome b6. This Arabidopsis thaliana (Mouse-ear cress) protein is YlmG homolog protein 1-2, chloroplastic.